Here is a 136-residue protein sequence, read N- to C-terminus: NADPH-dependent 7-cyano-7-deazaguanine reductase (136 aa).

C50 serves as the catalytic Thioimide intermediate. D57 functions as the Proton donor in the catalytic mechanism. Residues 72–74 (YEL) and 91–92 (HE) contribute to the substrate site.

It belongs to the GTP cyclohydrolase I family. QueF type 1 subfamily.

The protein localises to the cytoplasm. The catalysed reaction is 7-aminomethyl-7-carbaguanine + 2 NADP(+) = 7-cyano-7-deazaguanine + 2 NADPH + 3 H(+). Its pathway is tRNA modification; tRNA-queuosine biosynthesis. Its function is as follows. Catalyzes the NADPH-dependent reduction of 7-cyano-7-deazaguanine (preQ0) to 7-aminomethyl-7-deazaguanine (preQ1). In Prochlorococcus marinus (strain MIT 9312), this protein is NADPH-dependent 7-cyano-7-deazaguanine reductase.